A 337-amino-acid chain; its full sequence is Diacylglycerol O-acyltransferase 2-like protein 6 (337 aa).

2 helical membrane passes run 22–42 (MPVYVFLGAIPIIVIPYFLVF) and 102–122 (YIIASHPHGVLPYGTFINFAT).

This sequence belongs to the diacylglycerol acyltransferase family.

The protein localises to the endoplasmic reticulum membrane. It catalyses the reaction 1,2-di-(9Z-octadecenoyl)-sn-glycerol + (9Z)-octadecenoyl-CoA = 1,2,3-tri-(9Z-octadecenoyl)-glycerol + CoA. In terms of biological role, diglyceride acyltransferase that uses fatty acyl-CoA as substrate. Particularly active with oleate as a substrate. Has no wax synthase activity to produce wax esters. This Bos taurus (Bovine) protein is Diacylglycerol O-acyltransferase 2-like protein 6 (DGAT2L6).